The chain runs to 130 residues: Small ribosomal subunit protein uS11 (130 aa).

Belongs to the universal ribosomal protein uS11 family. In terms of assembly, part of the 30S ribosomal subunit. Interacts with proteins S7 and S18. Binds to IF-3.

In terms of biological role, located on the platform of the 30S subunit, it bridges several disparate RNA helices of the 16S rRNA. Forms part of the Shine-Dalgarno cleft in the 70S ribosome. The polypeptide is Small ribosomal subunit protein uS11 (Prochlorococcus marinus (strain MIT 9303)).